The sequence spans 151 residues: Macrodomain Ter protein (151 aa).

It belongs to the MatP family. As to quaternary structure, homodimer.

Its subcellular location is the cytoplasm. In terms of biological role, required for spatial organization of the terminus region of the chromosome (Ter macrodomain) during the cell cycle. Prevents early segregation of duplicated Ter macrodomains during cell division. Binds specifically to matS, which is a 13 bp signature motif repeated within the Ter macrodomain. The polypeptide is Macrodomain Ter protein (Escherichia fergusonii (strain ATCC 35469 / DSM 13698 / CCUG 18766 / IAM 14443 / JCM 21226 / LMG 7866 / NBRC 102419 / NCTC 12128 / CDC 0568-73)).